A 171-amino-acid chain; its full sequence is Transcription factor E (171 aa).

Positions 5 to 91 (DNKAVRGYIQ…LWKLDLDNSV (87 aa)) constitute an HTH TFE/IIEalpha-type domain.

The protein belongs to the TFE family. As to quaternary structure, monomer. Interaction with RNA polymerase subunits RpoF and RpoE is necessary for Tfe stimulatory transcription activity. Able to interact with Tbp and RNA polymerase in the absence of DNA promoter. Interacts both with the preinitiation and elongation complexes.

Transcription factor that plays a role in the activation of archaeal genes transcribed by RNA polymerase. Facilitates transcription initiation by enhancing TATA-box recognition by TATA-box-binding protein (Tbp), and transcription factor B (Tfb) and RNA polymerase recruitment. Not absolutely required for transcription in vitro, but particularly important in cases where Tbp or Tfb function is not optimal. It dynamically alters the nucleic acid-binding properties of RNA polymerases by stabilizing the initiation complex and destabilizing elongation complexes. Seems to translocate with the RNA polymerase following initiation and acts by binding to the non template strand of the transcription bubble in elongation complexes. This is Transcription factor E from Methanocella arvoryzae (strain DSM 22066 / NBRC 105507 / MRE50).